A 321-amino-acid polypeptide reads, in one-letter code: Isoaspartyl peptidase (321 aa).

Thr-179 serves as the catalytic Nucleophile. Substrate contacts are provided by residues Arg-207–Asp-210 and Thr-230–Gly-233.

This sequence belongs to the Ntn-hydrolase family. In terms of assembly, heterotetramer of two alpha and two beta chains arranged as a dimer of alpha/beta heterodimers. Autocleaved. Generates the alpha and beta subunits. The N-terminal residue of the beta subunit is thought to be responsible for the nucleophile hydrolase activity. In terms of processing, both subunits undergo further processing at their C-termini. The overexpressed alpha subunit seems to consist of residues 2-161, with an oxidized Met residue and a tightly coordinated Na(+), whereas the overexpressed beta subunit is processed to residue 315 and has 3 oxidized Met residues. Processing of the alpha subunit is inhibited by Zn(2+).

The enzyme catalyses Cleavage of a beta-linked Asp residue from the N-terminus of a polypeptide.. Functionally, degrades proteins damaged by L-isoaspartyl residue formation (also known as beta-Asp residues). Degrades L-isoaspartyl-containing di- and maybe also tripeptides. Also has L-asparaginase activity, although this may not be its principal function. In terms of biological role, may be involved in glutathione, and possibly other peptide, transport, although these results could also be due to polar effects of disruption. The sequence is that of Isoaspartyl peptidase (iaaA) from Escherichia coli (strain K12).